The sequence spans 571 residues: Penicillin-binding protein activator LpoA (571 aa).

An N-terminal signal peptide occupies residues 1–26; it reads MMTILLQHTHLKNRLMPFLLALFLAG. A lipid anchor (N-palmitoyl cysteine) is attached at cysteine 27. Cysteine 27 is lipidated: S-diacylglycerol cysteine.

It belongs to the LpoA family. Interacts with PBP1a.

It is found in the cell outer membrane. Its function is as follows. Regulator of peptidoglycan synthesis that is essential for the function of penicillin-binding protein 1A (PBP1a). The protein is Penicillin-binding protein activator LpoA of Pasteurella multocida (strain Pm70).